We begin with the raw amino-acid sequence, 290 residues long: UDP-N-acetylenolpyruvoylglucosamine reductase (290 aa).

The FAD-binding PCMH-type domain maps to 20–187 (GVGGESEMWF…SRVRLKLRPS (168 aa)). Residue Arg-167 is part of the active site.

Belongs to the MurB family. FAD serves as cofactor.

The protein localises to the cytoplasm. The catalysed reaction is UDP-N-acetyl-alpha-D-muramate + NADP(+) = UDP-N-acetyl-3-O-(1-carboxyvinyl)-alpha-D-glucosamine + NADPH + H(+). It participates in cell wall biogenesis; peptidoglycan biosynthesis. Functionally, cell wall formation. This chain is UDP-N-acetylenolpyruvoylglucosamine reductase, found in Deinococcus radiodurans (strain ATCC 13939 / DSM 20539 / JCM 16871 / CCUG 27074 / LMG 4051 / NBRC 15346 / NCIMB 9279 / VKM B-1422 / R1).